Consider the following 406-residue polypeptide: Probable G-protein coupled receptor tkr-1 (406 aa).

The Extracellular portion of the chain corresponds to 1–47 (MNQEFLIQLGERACKNAENLTLPAELEGIFFCAPSSRESLATQVFVA). The helical transmembrane segment at 48–68 (IAFVLLMATAIIGNSVVMWII) threads the bilayer. Residues 69–76 (YQHKVMHY) are Cytoplasmic-facing. A helical membrane pass occupies residues 77 to 97 (GFNYFLFNMAFADLLIALFNV). The Extracellular segment spans residues 98 to 115 (GTSWTYNLYYDWWYGDLC). A helical membrane pass occupies residues 116–136 (TLTSFFGIAPTTVSVCSMMAL). Residues 137-158 (SWDRCQAVVNPLQKRPLSRKRS) are Cytoplasmic-facing. A helical membrane pass occupies residues 159–179 (VIAILIIWVVSTVTALPFAIA). Topologically, residues 180 to 204 (ASVNSLYTYDVVTSTVSKAHVCSAP) are extracellular. Residues 205-225 (VNTFFEKVLFGIQYALPIIIL) form a helical membrane-spanning segment. Over 226–261 (GSTFTRIAVAFRATNEATDSSLKNNHTRAKSKAVKM) the chain is Cytoplasmic. A helical transmembrane segment spans residues 262–282 (LFLMVVAFVVCWLPYHIYHAF). At 283–297 (ALEEFFDAARGKYAY) the chain is on the extracellular side. Residues 298–318 (LLIYWIAMSSCAYNPIIYCFA) form a helical membrane-spanning segment. At 319–406 (NERFRIGFRY…KVHLLSCHER (88 aa)) the chain is on the cytoplasmic side.

The protein belongs to the G-protein coupled receptor 1 family.

The protein resides in the cell membrane. Its function is as follows. Not known. Putative receptor. In Caenorhabditis elegans, this protein is Probable G-protein coupled receptor tkr-1 (tkr-1).